The following is a 30-amino-acid chain: Cysteine-rich venom protein okinavin (30 aa).

Residues 1-30 (SVDFDSESPRKPXIQNEIVDLHNPLRRXVN) form a disordered region.

It belongs to the CRISP family. In terms of processing, contains 8 disulfide bonds. Expressed by the venom gland.

It localises to the secreted. Functionally, inhibits calcium-activated potassium channels (KCa), voltage-gated potassium channel (Kv), and the calcium release channel/ryanodine receptor (RyR). The chain is Cysteine-rich venom protein okinavin from Ovophis okinavensis (Ryukyu Island pit viper).